The sequence spans 290 residues: Nucleotide-binding protein FN1089 (290 aa).

11 to 18 (GLSGAGKT) lines the ATP pocket. 56 to 59 (DIRT) is a binding site for GTP.

Belongs to the RapZ-like family.

Functionally, displays ATPase and GTPase activities. In Fusobacterium nucleatum subsp. nucleatum (strain ATCC 25586 / DSM 15643 / BCRC 10681 / CIP 101130 / JCM 8532 / KCTC 2640 / LMG 13131 / VPI 4355), this protein is Nucleotide-binding protein FN1089.